Reading from the N-terminus, the 495-residue chain is Divinyl ether synthase CYP74M3 (495 aa).

Cys446 is a heme binding site.

This sequence belongs to the cytochrome P450 family. Requires heme as cofactor.

It catalyses the reaction (13S)-hydroperoxy-(9Z,11E)-octadecadienoate = etheroleate + H2O. The catalysed reaction is (13S)-hydroperoxy-(9Z,11E,15Z)-octadecatrienoate = etherolenate + H2O. It functions in the pathway lipid metabolism; oxylipin biosynthesis. Functionally, divinyl ether synthase involved in oxylipin biosynthesis. Catalyzes the conversion of (13S)-hydroperoxy-(9Z,11E)-octadecadienoate (13-HPOD) to etheroleate and (13S)-hydroperoxy-(9Z,11E,15Z)-octadecatrienoate (13-HPOT) to etherolenate. Has no activity with the corresponding 9-hydroperoxides (9-HPOD and 9-HPOT). This is Divinyl ether synthase CYP74M3 from Selaginella moellendorffii (Spikemoss).